A 306-amino-acid chain; its full sequence is ORF-B protein (306 aa).

3 consecutive transmembrane segments (helical) span residues 92–112 (MIQWDYVFYLLPRVWIMFPFI), 120–140 (LTHLLTLTTSVLSATSLVFGW), and 161–181 (VIEWLAQFSFLFTHVTLIVVS).

In terms of assembly, interacts with host RACK1.

The protein localises to the host cytoplasm. The protein resides in the host cell membrane. In Sander vitreus (Walleye), this protein is ORF-B protein.